We begin with the raw amino-acid sequence, 487 residues long: N-succinylglutamate 5-semialdehyde dehydrogenase (487 aa).

221-226 (GSSDTG) contributes to the NAD(+) binding site. Residues Glu244 and Cys278 contribute to the active site.

Belongs to the aldehyde dehydrogenase family. AstD subfamily.

It catalyses the reaction N-succinyl-L-glutamate 5-semialdehyde + NAD(+) + H2O = N-succinyl-L-glutamate + NADH + 2 H(+). The protein operates within amino-acid degradation; L-arginine degradation via AST pathway; L-glutamate and succinate from L-arginine: step 4/5. Catalyzes the NAD-dependent reduction of succinylglutamate semialdehyde into succinylglutamate. This is N-succinylglutamate 5-semialdehyde dehydrogenase from Burkholderia thailandensis (strain ATCC 700388 / DSM 13276 / CCUG 48851 / CIP 106301 / E264).